We begin with the raw amino-acid sequence, 548 residues long: Glutamyl-tRNA(Gln) amidotransferase subunit B, chloroplastic/mitochondrial (548 aa).

Belongs to the GatB/GatE family. GatB subfamily. Subunit of the heterotrimeric GatCAB amidotransferase (AdT) complex, composed of A, B and C subunits.

Its subcellular location is the mitochondrion. The protein localises to the plastid. It localises to the chloroplast. The catalysed reaction is L-glutamyl-tRNA(Gln) + L-glutamine + ATP + H2O = L-glutaminyl-tRNA(Gln) + L-glutamate + ADP + phosphate + H(+). In terms of biological role, allows the formation of correctly charged Gln-tRNA(Gln) through the transamidation of misacylated Glu-tRNA(Gln) in chloroplasts and mitochondria. The reaction takes place in the presence of glutamine and ATP through an activated gamma-phospho-Glu-tRNA(Gln). The chain is Glutamyl-tRNA(Gln) amidotransferase subunit B, chloroplastic/mitochondrial from Sorghum bicolor (Sorghum).